Consider the following 760-residue polypeptide: Transglutaminase-activating metalloprotease (760 aa).

The first 33 residues, 1–33, serve as a signal peptide directing secretion; sequence MRPTPQRRAVATGALVAVTAMLAVGVQTTSANA. 2 disordered regions span residues 32–59 and 228–265; these read NAGQDKAAHPAPRQSIHKPDPGAEPVKL and KQGTGNSQHSGQVQIGTTKSGSSYQMNDTTRGGHKTYN. The propeptide occupies 34–229; sequence GQDKAAHPAP…KLFEFQGVKQ (196 aa). Over residues 228 to 257 the composition is skewed to polar residues; the sequence is KQGTGNSQHSGQVQIGTTKSGSSYQMNDTT. Residue His-366 coordinates Zn(2+). Glu-367 is a catalytic residue. Residues His-370 and Glu-390 each contribute to the Zn(2+) site. The Proton donor role is filled by His-454. In terms of domain architecture, P/Homo B spans 640–760; sequence TVNTTGGGSV…GTIDKWRLTF (121 aa).

Belongs to the peptidase M4 family. Zn(2+) serves as cofactor.

The protein localises to the secreted. Cleaves the N-terminal propeptide of transglutaminase thus activating it. This is Transglutaminase-activating metalloprotease from Streptomyces mobaraensis (Streptoverticillium mobaraense).